Here is a 139-residue protein sequence, read N- to C-terminus: Ribonuclease VapC39 (139 aa).

In terms of domain architecture, PINc spans 4–133 (LLDVNVLIAL…DAALADSASA (130 aa)). The Mg(2+) site is built by D6 and D106.

The protein belongs to the PINc/VapC protein family. Mg(2+) serves as cofactor.

Functionally, toxic component of a type II toxin-antitoxin (TA) system. An RNase. Its toxic effect is neutralized by coexpression with cognate antitoxin VapB39. This chain is Ribonuclease VapC39, found in Mycobacterium tuberculosis (strain CDC 1551 / Oshkosh).